Consider the following 122-residue polypeptide: Ribosome-binding factor A (122 aa).

This sequence belongs to the RbfA family. Monomer. Binds 30S ribosomal subunits, but not 50S ribosomal subunits or 70S ribosomes.

It localises to the cytoplasm. Functionally, one of several proteins that assist in the late maturation steps of the functional core of the 30S ribosomal subunit. Associates with free 30S ribosomal subunits (but not with 30S subunits that are part of 70S ribosomes or polysomes). Required for efficient processing of 16S rRNA. May interact with the 5'-terminal helix region of 16S rRNA. This is Ribosome-binding factor A from Geotalea uraniireducens (strain Rf4) (Geobacter uraniireducens).